A 118-amino-acid chain; its full sequence is Small ribosomal subunit protein uS13 (118 aa).

Residues 94 to 118 are disordered; sequence SLPVRGQRTKTNARTRKGPRKPIKK.

It belongs to the universal ribosomal protein uS13 family. As to quaternary structure, part of the 30S ribosomal subunit. Forms a loose heterodimer with protein S19. Forms two bridges to the 50S subunit in the 70S ribosome.

Located at the top of the head of the 30S subunit, it contacts several helices of the 16S rRNA. In the 70S ribosome it contacts the 23S rRNA (bridge B1a) and protein L5 of the 50S subunit (bridge B1b), connecting the 2 subunits; these bridges are implicated in subunit movement. Contacts the tRNAs in the A and P-sites. The protein is Small ribosomal subunit protein uS13 of Haemophilus influenzae (strain 86-028NP).